Here is a 361-residue protein sequence, read N- to C-terminus: Phospho-N-acetylmuramoyl-pentapeptide-transferase (361 aa).

The next 10 helical transmembrane spans lie at 28–48 (LSMF…IKFF), 70–90 (IGTP…GILL), 94–114 (LSNY…LLGA), 129–149 (VSFK…IYGL), 169–189 (LIIN…VGSS), 205–225 (PVIL…NIVF), 237–257 (MGEV…FLWF), 264–284 (IFMG…IGII), 289–309 (IVLA…IIQV), and 338–358 (TVVI…LATL).

It belongs to the glycosyltransferase 4 family. MraY subfamily. The cofactor is Mg(2+).

Its subcellular location is the cell inner membrane. The catalysed reaction is UDP-N-acetyl-alpha-D-muramoyl-L-alanyl-gamma-D-glutamyl-meso-2,6-diaminopimeloyl-D-alanyl-D-alanine + di-trans,octa-cis-undecaprenyl phosphate = di-trans,octa-cis-undecaprenyl diphospho-N-acetyl-alpha-D-muramoyl-L-alanyl-D-glutamyl-meso-2,6-diaminopimeloyl-D-alanyl-D-alanine + UMP. The protein operates within cell wall biogenesis; peptidoglycan biosynthesis. Its function is as follows. Catalyzes the initial step of the lipid cycle reactions in the biosynthesis of the cell wall peptidoglycan: transfers peptidoglycan precursor phospho-MurNAc-pentapeptide from UDP-MurNAc-pentapeptide onto the lipid carrier undecaprenyl phosphate, yielding undecaprenyl-pyrophosphoryl-MurNAc-pentapeptide, known as lipid I. This is Phospho-N-acetylmuramoyl-pentapeptide-transferase from Pelagibacter ubique (strain HTCC1062).